The chain runs to 442 residues: Endothelin receptor type B (442 aa).

Residues 1–26 (MQSSASRCGRALVALLLACGLLGVWG) form the signal peptide. Topologically, residues 27–101 (EKRGFPPAQA…RKIEINKTFK (75 aa)) are extracellular. Residues Asn-60 and Asn-97 are each glycosylated (N-linked (GlcNAc...) asparagine). The helical transmembrane segment at 102–126 (YINTIVSCLVFVLGIIGNSTLLRII) threads the bilayer. At 127–137 (YKNKCMRNGPN) the chain is on the cytoplasmic side. The chain crosses the membrane as a helical span at residues 138-163 (ILIASLALGDLLHIIIDIPINAYKLL). The Extracellular portion of the chain corresponds to 164–175 (AGDWPFGAEMCK). A disulfide bridge links Cys-174 with Cys-255. A helical transmembrane segment spans residues 176–197 (LVPFIQKASVGITVLSLCALSI). Topologically, residues 198–218 (DRYRAVASWSRIKGIGVPKWT) are cytoplasmic. The chain crosses the membrane as a helical span at residues 219–243 (AVEIVLIWVVSVVLAVPEAIGFDVI). The Extracellular segment spans residues 244 to 271 (TSDYKGKPLRVCMLNPFQKTAFMQFYKT). The helical transmembrane segment at 272 to 296 (AKDWWLFSFYFCLPLAITAIFYTLM) threads the bilayer. The Cytoplasmic segment spans residues 297–324 (TCEMLRKKSGMQIALNDHLKQRREVAKT). Ser-305 carries the phosphoserine modification. A helical transmembrane segment spans residues 325–350 (VFCLVLVFALCWLPLHLSRILKLTLY). The Extracellular portion of the chain corresponds to 351-362 (DQSNPQRCELLS). The chain crosses the membrane as a helical span at residues 363-389 (FLLVLDYIGINMASLNSCINPIALYLV). The Cytoplasmic portion of the chain corresponds to 390-442 (SKRFKNCFKSCLCCWCQTFEEKQSLEEKQSCLKFKANDHGYDNFRSSNKYSSS). 3 S-palmitoyl cysteine lipidation sites follow: Cys-402, Cys-403, and Cys-405. Ser-419 is modified (phosphoserine). Tyr-439 bears the Phosphotyrosine mark. 3 positions are modified to phosphoserine: Ser-440, Ser-441, and Ser-442.

It belongs to the G-protein coupled receptor 1 family. Endothelin receptor subfamily. EDNRB sub-subfamily. Widely distributed in cell types of a variety of tissues.

It localises to the cell membrane. Its function is as follows. Non-specific receptor for endothelin 1, 2, and 3. Mediates its action by association with G proteins that activate a phosphatidylinositol-calcium second messenger system. The chain is Endothelin receptor type B from Rattus norvegicus (Rat).